A 207-amino-acid chain; its full sequence is Large ribosomal subunit protein bL25 (207 aa).

This sequence belongs to the bacterial ribosomal protein bL25 family. CTC subfamily. As to quaternary structure, part of the 50S ribosomal subunit; part of the 5S rRNA/L5/L18/L25 subcomplex. Contacts the 5S rRNA. Binds to the 5S rRNA independently of L5 and L18.

This is one of the proteins that binds to the 5S RNA in the ribosome where it forms part of the central protuberance. This Bordetella petrii (strain ATCC BAA-461 / DSM 12804 / CCUG 43448) protein is Large ribosomal subunit protein bL25.